Reading from the N-terminus, the 195-residue chain is MYEYFEGIISEVTPSYVVVDVNGIGYKVFSPTPFAYKQGQKAKVYIEQIVRDTGITLYGFQDQDDKGLFLKLLSVSGIGPKSAMAIMAAEDSNSLAEAIEQGEVKYLTRFPGVGKKTASQIVLDLKGKLGDYVARLDKPENGEEISPALNDALLALIALGYTQKEVDRITPKLVEIEADTADQYIKKGLALLLKK.

Residues 1 to 61 (MYEYFEGIIS…DTGITLYGFQ (61 aa)) are domain I. Residues 62–140 (DQDDKGLFLK…DYVARLDKPE (79 aa)) are domain II. The flexible linker stretch occupies residues 141–146 (NGEEIS). The segment at 146–195 (SPALNDALLALIALGYTQKEVDRITPKLVEIEADTADQYIKKGLALLLKK) is domain III.

Belongs to the RuvA family. Homotetramer. Forms an RuvA(8)-RuvB(12)-Holliday junction (HJ) complex. HJ DNA is sandwiched between 2 RuvA tetramers; dsDNA enters through RuvA and exits via RuvB. An RuvB hexamer assembles on each DNA strand where it exits the tetramer. Each RuvB hexamer is contacted by two RuvA subunits (via domain III) on 2 adjacent RuvB subunits; this complex drives branch migration. In the full resolvosome a probable DNA-RuvA(4)-RuvB(12)-RuvC(2) complex forms which resolves the HJ.

The protein localises to the cytoplasm. Functionally, the RuvA-RuvB-RuvC complex processes Holliday junction (HJ) DNA during genetic recombination and DNA repair, while the RuvA-RuvB complex plays an important role in the rescue of blocked DNA replication forks via replication fork reversal (RFR). RuvA specifically binds to HJ cruciform DNA, conferring on it an open structure. The RuvB hexamer acts as an ATP-dependent pump, pulling dsDNA into and through the RuvAB complex. HJ branch migration allows RuvC to scan DNA until it finds its consensus sequence, where it cleaves and resolves the cruciform DNA. The chain is Holliday junction branch migration complex subunit RuvA from Lactobacillus acidophilus (strain ATCC 700396 / NCK56 / N2 / NCFM).